A 234-amino-acid polypeptide reads, in one-letter code: Cytochrome b (234 aa).

4 consecutive transmembrane segments (helical) span residues 33 to 53, 77 to 98, 113 to 133, and 178 to 198; these read FGSLLGLCLMIQILTGLFLAM, WLIRYLHANGASMFFICLYMHV, WNIGIILLFAVMATAFMGYVL, and FFAFHFILPFIIAALVMIHLL. The heme b site is built by H83 and H97. Positions 182 and 196 each coordinate heme b. H201 is an a ubiquinone binding site. Residues 226–234 form a helical membrane-spanning segment; the sequence is IKDVLGFLM.

The protein belongs to the cytochrome b family. In terms of assembly, the cytochrome bc1 complex contains 11 subunits: 3 respiratory subunits (MT-CYB, CYC1 and UQCRFS1), 2 core proteins (UQCRC1 and UQCRC2) and 6 low-molecular weight proteins (UQCRH/QCR6, UQCRB/QCR7, UQCRQ/QCR8, UQCR10/QCR9, UQCR11/QCR10 and a cleavage product of UQCRFS1). This cytochrome bc1 complex then forms a dimer. Heme b is required as a cofactor.

The protein localises to the mitochondrion inner membrane. Functionally, component of the ubiquinol-cytochrome c reductase complex (complex III or cytochrome b-c1 complex) that is part of the mitochondrial respiratory chain. The b-c1 complex mediates electron transfer from ubiquinol to cytochrome c. Contributes to the generation of a proton gradient across the mitochondrial membrane that is then used for ATP synthesis. The polypeptide is Cytochrome b (MT-CYB) (Lepus alleni (Antelope jackrabbit)).